Reading from the N-terminus, the 309-residue chain is Epidermal retinol dehydrogenase 2 (309 aa).

Residues leucine 11 to leucine 31 form a helical membrane-spanning segment. NADP(+) is bound at residue leucine 44–valine 68. Position 177 (serine 177) interacts with substrate. Tyrosine 190 serves as the catalytic Proton acceptor. The helical transmembrane segment at leucine 270 to alanine 290 threads the bilayer.

This sequence belongs to the short-chain dehydrogenases/reductases (SDR) family. As to expression, detected in adult lung. Detected at low levels in adult brain, heart, testis, placenta, cervix, pancreas, uterus, stomach, rectum, small intestine, colon, esophagus, thymus, skin, and skin keratinocyte. Expression is higher in psoriasis lesions relative to unaffected skin from psoriasis patients. Detected in fetal kidney, skin and lung.

It localises to the endoplasmic reticulum membrane. It carries out the reaction all-trans-retinol--[retinol-binding protein] + NAD(+) = all-trans-retinal--[retinol-binding protein] + NADH + H(+). It participates in cofactor metabolism; retinol metabolism. Its function is as follows. Oxidoreductase with strong preference for NAD. Active in both the oxidative and reductive directions. Oxidizes all-trans-retinol in all-trans-retinaldehyde. No activity was detected with 11-cis-retinol or 11-cis-retinaldehyde as substrates with either NAD(+)/NADH or NADP(+)/NADPH. This is Epidermal retinol dehydrogenase 2 from Homo sapiens (Human).